Consider the following 207-residue polypeptide: Holliday junction branch migration complex subunit RuvA (207 aa).

The interval 1–65 (MYDYIRGVLT…ETEHVLYGFH (65 aa)) is domain I. Positions 66–144 (TRGERECFRM…DLLPLDAQIL (79 aa)) are domain II. A flexible linker region spans residues 145-155 (ASWEPAKPSCM). The segment at 155-207 (MEEGIQALAALGYPKSSAERMIAEAMSELPDHASVAEILPIALKKNLQGLNKI) is domain III.

The protein belongs to the RuvA family. In terms of assembly, homotetramer. Forms an RuvA(8)-RuvB(12)-Holliday junction (HJ) complex. HJ DNA is sandwiched between 2 RuvA tetramers; dsDNA enters through RuvA and exits via RuvB. An RuvB hexamer assembles on each DNA strand where it exits the tetramer. Each RuvB hexamer is contacted by two RuvA subunits (via domain III) on 2 adjacent RuvB subunits; this complex drives branch migration. In the full resolvosome a probable DNA-RuvA(4)-RuvB(12)-RuvC(2) complex forms which resolves the HJ.

The protein localises to the cytoplasm. The RuvA-RuvB-RuvC complex processes Holliday junction (HJ) DNA during genetic recombination and DNA repair, while the RuvA-RuvB complex plays an important role in the rescue of blocked DNA replication forks via replication fork reversal (RFR). RuvA specifically binds to HJ cruciform DNA, conferring on it an open structure. The RuvB hexamer acts as an ATP-dependent pump, pulling dsDNA into and through the RuvAB complex. HJ branch migration allows RuvC to scan DNA until it finds its consensus sequence, where it cleaves and resolves the cruciform DNA. This is Holliday junction branch migration complex subunit RuvA from Chlamydia abortus (strain DSM 27085 / S26/3) (Chlamydophila abortus).